Here is a 1563-residue protein sequence, read N- to C-terminus: DNA-directed RNA polymerase subunit beta' (1563 aa).

Residues Cys-61, Cys-63, Cys-76, and Cys-79 each coordinate Zn(2+). Residues Asp-588, Asp-590, and Asp-592 each coordinate Mg(2+). Residues Cys-925, Cys-999, Cys-1006, and Cys-1009 each contribute to the Zn(2+) site.

Belongs to the RNA polymerase beta' chain family. As to quaternary structure, the RNAP catalytic core consists of 2 alpha, 1 beta, 1 beta' and 1 omega subunit. When a sigma factor is associated with the core the holoenzyme is formed, which can initiate transcription. Requires Mg(2+) as cofactor. The cofactor is Zn(2+).

It catalyses the reaction RNA(n) + a ribonucleoside 5'-triphosphate = RNA(n+1) + diphosphate. DNA-dependent RNA polymerase catalyzes the transcription of DNA into RNA using the four ribonucleoside triphosphates as substrates. In Hydrogenobaculum sp. (strain Y04AAS1), this protein is DNA-directed RNA polymerase subunit beta'.